Reading from the N-terminus, the 708-residue chain is Soluble guanylate cyclase gcy-37 (708 aa).

Position 105 (His-105) interacts with heme. Residues 368–409 (LNQSRICQMELNKKLEETMKKMKKMTEELEVKKSQTDRLLFE) adopt a coiled-coil conformation. The Guanylate cyclase domain occupies 434–562 (SVIFTDIPDF…NTVNVTKSIC (129 aa)). The Mg(2+) site is built by Asp-439 and Asp-483.

Belongs to the adenylyl cyclase class-4/guanylyl cyclase family. Heterodimer; with other soluble guanylate cyclases. The cofactor is heme. As to expression, expressed in a small number of neurons, corresponding to URX, AQR and PQR neurons.

The protein resides in the cytoplasm. It catalyses the reaction GTP = 3',5'-cyclic GMP + diphosphate. With respect to regulation, may be regulated by molecular oxygen. Probably not activated by nitric oxide (NO). In terms of biological role, synthesizes cyclic GMP (cGMP) from GTP. May play a role in sensory neurons. In Caenorhabditis elegans, this protein is Soluble guanylate cyclase gcy-37 (gcy-37).